The chain runs to 225 residues: UPF0758 protein Shew_3481 (225 aa).

Residues 102 to 224 enclose the MPN domain; the sequence is ILSDPDLTRD…IVSFAERGWI (123 aa). Zn(2+) contacts are provided by His-173, His-175, and Asp-186. The JAMM motif signature appears at 173-186; sequence HNHPSGGAEPSHAD.

Belongs to the UPF0758 family.

The chain is UPF0758 protein Shew_3481 from Shewanella loihica (strain ATCC BAA-1088 / PV-4).